Reading from the N-terminus, the 292-residue chain is uncharacterized protein (292 aa).

This is an uncharacterized protein from Aquifex aeolicus (strain VF5).